A 190-amino-acid chain; its full sequence is MTALWIAIAALSALGLLFGLVLGYAARRFEVEEDPVAEQVDEILPQSQCGQCGYPGCRPYAEAVANGEMINKCAPGGEQVMLKLAELLNVEPQPLGSEAAAEPVRQVAYIDEANCIGCTKCIQACPVDAIVGATRAMHTVITDLCTGCDLCVAPCPTDCIEMRPVATTTANWKWDMKTIPVQVIHVEQHA.

The tract at residues 1-26 (MTALWIAIAALSALGLLFGLVLGYAA) is hydrophobic. The region spanning 32 to 90 (EEDPVAEQVDEILPQSQCGQCGYPGCRPYAEAVANGEMINKCAPGGEQVMLKLAELLNV) is the 4Fe-4S domain. The [4Fe-4S] cluster site is built by C49, C52, C57, C73, C115, C118, C121, C125, C145, C148, C151, and C155. 2 4Fe-4S ferredoxin-type domains span residues 106–135 (QVAYIDEANCIGCTKCIQACPVDAIVGATR) and 136–165 (AMHTVITDLCTGCDLCVAPCPTDCIEMRPV).

The protein belongs to the 4Fe4S bacterial-type ferredoxin family. RnfB subfamily. In terms of assembly, the complex is composed of six subunits: RnfA, RnfB, RnfC, RnfD, RnfE and RnfG. The cofactor is [4Fe-4S] cluster.

It localises to the cell inner membrane. In terms of biological role, part of a membrane-bound complex that couples electron transfer with translocation of ions across the membrane. In Serratia proteamaculans (strain 568), this protein is Ion-translocating oxidoreductase complex subunit B.